Reading from the N-terminus, the 88-residue chain is Small ribosomal subunit protein bS20 (88 aa).

A disordered region spans residues 1 to 27 (MANSKSAKKRALQSEKRRQHNASRRSM).

This sequence belongs to the bacterial ribosomal protein bS20 family.

Functionally, binds directly to 16S ribosomal RNA. The protein is Small ribosomal subunit protein bS20 of Shewanella sp. (strain ANA-3).